The sequence spans 437 residues: UDP-N-acetylmuramoylalanine--D-glutamate ligase (437 aa).

ATP is bound at residue 112-118; sequence GSNGKST.

This sequence belongs to the MurCDEF family.

It localises to the cytoplasm. It catalyses the reaction UDP-N-acetyl-alpha-D-muramoyl-L-alanine + D-glutamate + ATP = UDP-N-acetyl-alpha-D-muramoyl-L-alanyl-D-glutamate + ADP + phosphate + H(+). Its pathway is cell wall biogenesis; peptidoglycan biosynthesis. In terms of biological role, cell wall formation. Catalyzes the addition of glutamate to the nucleotide precursor UDP-N-acetylmuramoyl-L-alanine (UMA). This Haemophilus influenzae (strain 86-028NP) protein is UDP-N-acetylmuramoylalanine--D-glutamate ligase.